Reading from the N-terminus, the 209-residue chain is Imidazole glycerol phosphate synthase subunit HisH (209 aa).

A Glutamine amidotransferase type-1 domain is found at Met1 to Ser205. The active-site Nucleophile is the Cys79. Catalysis depends on residues His180 and Glu182.

As to quaternary structure, heterodimer of HisH and HisF.

It localises to the cytoplasm. It carries out the reaction 5-[(5-phospho-1-deoxy-D-ribulos-1-ylimino)methylamino]-1-(5-phospho-beta-D-ribosyl)imidazole-4-carboxamide + L-glutamine = D-erythro-1-(imidazol-4-yl)glycerol 3-phosphate + 5-amino-1-(5-phospho-beta-D-ribosyl)imidazole-4-carboxamide + L-glutamate + H(+). The enzyme catalyses L-glutamine + H2O = L-glutamate + NH4(+). The protein operates within amino-acid biosynthesis; L-histidine biosynthesis; L-histidine from 5-phospho-alpha-D-ribose 1-diphosphate: step 5/9. In terms of biological role, IGPS catalyzes the conversion of PRFAR and glutamine to IGP, AICAR and glutamate. The HisH subunit catalyzes the hydrolysis of glutamine to glutamate and ammonia as part of the synthesis of IGP and AICAR. The resulting ammonia molecule is channeled to the active site of HisF. The protein is Imidazole glycerol phosphate synthase subunit HisH of Bacillus anthracis (strain CDC 684 / NRRL 3495).